Reading from the N-terminus, the 446-residue chain is NADH oxidase (446 aa).

Residues 7–11 (GTNHA), D32, C42, V79, 109–112 (ATGS), K131, and Y158 contribute to the FAD site. Residue H10 is the Proton acceptor of the active site. The Redox-active role is filled by C42. Residue C42 is modified to Cysteine sulfinic acid (-SO2H). I159, D178, Y187, and G244 together coordinate NAD(+). Residue D282 participates in FAD binding. Residue A298 participates in NAD(+) binding. 3 residues coordinate FAD: L299, A300, and S301. G329 lines the NAD(+) pocket. F427 is an FAD binding site.

This sequence belongs to the class-III pyridine nucleotide-disulfide oxidoreductase family. Homodimer. The cofactor is FAD.

It carries out the reaction 2 NADH + O2 + 2 H(+) = 2 NAD(+) + 2 H2O. With respect to regulation, inhibited by hydrogen peroxide, sulfhydryl reagents and quinine, but not by EDTA. Its function is as follows. Catalyzes the four-electron reduction of molecular oxygen to water. Active on beta-NADH, but not on alpha-NADH, beta-NADPH or alpha-NADPH. Under aerobic conditions, oxygen acts as the electron acceptor. Under anaerobic conditions, DCIP and MB can replace oxygen as the electron acceptor. This chain is NADH oxidase, found in Lactococcus lactis subsp. cremoris (strain MG1363).